A 432-amino-acid polypeptide reads, in one-letter code: Trigger factor (432 aa).

A PPIase FKBP-type domain is found at 161–246 (EDRVTIDFTG…LKKVEERGLP (86 aa)).

This sequence belongs to the FKBP-type PPIase family. Tig subfamily.

Its subcellular location is the cytoplasm. It carries out the reaction [protein]-peptidylproline (omega=180) = [protein]-peptidylproline (omega=0). Its function is as follows. Involved in protein export. Acts as a chaperone by maintaining the newly synthesized protein in an open conformation. Functions as a peptidyl-prolyl cis-trans isomerase. The protein is Trigger factor of Salmonella choleraesuis (strain SC-B67).